Consider the following 349-residue polypeptide: Phosphate acyltransferase (349 aa).

This sequence belongs to the PlsX family. Homodimer. Probably interacts with PlsY.

Its subcellular location is the cytoplasm. It catalyses the reaction a fatty acyl-[ACP] + phosphate = an acyl phosphate + holo-[ACP]. The protein operates within lipid metabolism; phospholipid metabolism. In terms of biological role, catalyzes the reversible formation of acyl-phosphate (acyl-PO(4)) from acyl-[acyl-carrier-protein] (acyl-ACP). This enzyme utilizes acyl-ACP as fatty acyl donor, but not acyl-CoA. This Rhodopseudomonas palustris (strain BisA53) protein is Phosphate acyltransferase.